A 165-amino-acid polypeptide reads, in one-letter code: Transcription elongation factor GreA (165 aa).

The stretch at 55 to 78 (AAKEEQGKQELRVRQLTQLLESAK) forms a coiled coil.

It belongs to the GreA/GreB family.

Necessary for efficient RNA polymerase transcription elongation past template-encoded arresting sites. The arresting sites in DNA have the property of trapping a certain fraction of elongating RNA polymerases that pass through, resulting in locked ternary complexes. Cleavage of the nascent transcript by cleavage factors such as GreA or GreB allows the resumption of elongation from the new 3'terminus. GreA releases sequences of 2 to 3 nucleotides. The chain is Transcription elongation factor GreA from Streptomyces coelicolor (strain ATCC BAA-471 / A3(2) / M145).